Here is a 119-residue protein sequence, read N- to C-terminus: Large ribosomal subunit protein bL20 (119 aa).

It belongs to the bacterial ribosomal protein bL20 family.

Its function is as follows. Binds directly to 23S ribosomal RNA and is necessary for the in vitro assembly process of the 50S ribosomal subunit. It is not involved in the protein synthesizing functions of that subunit. This is Large ribosomal subunit protein bL20 from Halorhodospira halophila (strain DSM 244 / SL1) (Ectothiorhodospira halophila (strain DSM 244 / SL1)).